Reading from the N-terminus, the 219-residue chain is Transmembrane emp24 domain-containing protein 10 (219 aa).

The signal sequence occupies residues 1–31; the sequence is MSGSSGPLSWPGPRPCALLFLLLLGPSSVLA. The segment at 1–142 is required for interaction with STX17; the sequence is MSGSSGPLSW…KNYEEIAKVE (142 aa). The Lumenal segment spans residues 32–185; it reads ISFHLPVNSR…RDTNESTNTR (154 aa). Positions 41–193 constitute a GOLD domain; sequence RKCLREEIHK…TRVLYFSIFS (153 aa). A required for TMED10 and TMED2 cis-Golgi network localization region spans residues 147–178; the sequence is LEVELRRLEDLSESIVNDFAYMKKREEEMRDT. Residues Arg171 and Arg176 each carry the dimethylated arginine modification. Asn179 carries N-linked (GlcNAc...) asparagine glycosylation. The chain crosses the membrane as a helical span at residues 186-206; it reads VLYFSIFSMLCLIGLATWQVF. Residues 204-219 form an interaction with COPG1 region; sequence QVFYLRRFFKAKKLIE. Residues 207–219 are Cytoplasmic-facing; sequence YLRRFFKAKKLIE. The segment at 207–219 is interaction with ARF1 and IL1B; sequence YLRRFFKAKKLIE. A COPII vesicle coat-binding motif is present at residues 211-212; the sequence is FF. The COPI vesicle coat-binding motif lies at 211 to 219; the sequence is FFKAKKLIE.

It belongs to the EMP24/GP25L family. Predominantly dimeric and to a lesser extent monomeric in the ER. Monomer and dimer in ERGIC and cis-Golgi network. Forms homooligomer (via GOLD domain); the assembly is promoted by direct binding with leaderless cargos and may form a protein channel that facilitates cargo entry into the ERGIC. Forms heterooligomeric complexes with other members of the p24 family such as TMED2, TMED7 and TMED9. Interacts (via GOLD domain) with TMED2 (via GOLD domain); the complex is required for export of TMED10 from the ER to the cis-Golgi network; the complex is proposed to be involved in cis-Golgi network dynamics and / or biogenesis. Associates with the COPI vesicle coat subunits (coatomer). Tetramerization of the cytoplasmic domain at the Golgi membrane in vitro; the complex is proposed to interact with COPI coatomer and induce budding of the vesicles. Interacts with COPG1; the interaction involves TMED10 homodimer. Interacts with ARF1 (GDP-bound); the interaction probably involves a TMED10 oligomer. Interacts with SEC23A, SEC24B, SEC24C and SEC24D components of the coat protein complex II/COPII, indicative of an association of TMED10 with the COPII vesicle coat. Interacts with CD59. Interacts with MPPE1/PGAP5; the complex might recruit and sort GPI-anchored proteins to the ER-exit site, or the interaction might lead to recycling of PGAP5 between the ER and the Golgi. Interacts with F2LR1/PAR2. Interacts with KDELR2/ERD2; the interaction is disrupted by KDELR2 ligand. Found in a complex composed at least of SURF4, TMED2 and TMED10. Associates with the presenilin-dependent gamma-secretase complex. Interacts with STX17; the interaction is direct. Interacts with IL-1; the interaction is direct. Interacts with RAB21 (active GTP-bound form); the interaction is indirect and regulates TMED10 abundance and localization at the Golgi.

It is found in the endoplasmic reticulum membrane. It localises to the endoplasmic reticulum-Golgi intermediate compartment membrane. The protein resides in the golgi apparatus membrane. Its subcellular location is the golgi apparatus. The protein localises to the cis-Golgi network membrane. It is found in the trans-Golgi network membrane. It localises to the cytoplasmic vesicle. The protein resides in the secretory vesicle membrane. Its subcellular location is the cell membrane. The protein localises to the melanosome. Functionally, cargo receptor involved in protein vesicular trafficking and quality control in the endoplasmic reticulum (ER) and Golgi. The p24 protein family is a group of transmembrane proteins that bind coat protein complex I/COPI and coat protein complex II/COPII involved in vesicular trafficking between the membranes. Acts at the lumenal side for incorporation of secretory cargo molecules into transport vesicles and involved in vesicle coat formation at the cytoplasmic side. Mainly functions in the early secretory pathway and cycles between the ER, ER-Golgi intermediate compartment (ERGIC) and Golgi, mediating cargo transport through COPI and COPII-coated vesicles. In COPII vesicle-mediated anterograde transport, involved in the transport of GPI-anchored proteins by acting together with TMED2 as their cargo receptor; the function specifically implies SEC24C and SEC24D of the COPII vesicle coat and lipid raft-like microdomains of the ER. Recognizes GPI anchors structural remodeled in the ER by the GPI inositol-deacylase/PGAP1 and the metallophosphoesterase MPPE1/PGAP5. In COPI vesicle-mediated retrograde transport, involved in the biogenesis of COPI vesicles and vesicle coat recruitment. Involved in trafficking of amyloid beta A4 protein and soluble APP-beta release (independent from the modulation of gamma-secretase activity). Involved in the KDELR2-mediated retrograde transport of the toxin A subunit (CTX-A-K63)together with COPI and the COOH terminus of KDELR2. On Golgi membranes, acts as a primary receptor for ARF1-GDP, a GTP-binding protein involved in COPI-vesicle formation. Increases coatomer-dependent GTPase-activating activity of ARFGAP2 which mediates the hydrolysis of ARF1-bound GTP and therefore modulates protein trafficking from the Golgi apparatus. Involved in the exocytic trafficking of G protein-coupled receptors F2LR1/PAR2 (trypsin and tryspin-like enzyme receptor), OPRM1 (opioid receptor) and P2RY4 (UTD and UDP receptor) from the Golgi to the plasma membrane, thus contributing to receptor resensitization. In addition to its cargo receptor activity, may also act as a protein channel after oligomerization, facilitating the post-translational entry of leaderless cytoplasmic cargo into the ERGIC. Involved in the translocation into ERGIC, the vesicle entry and the secretion of leaderless cargos (lacking the secretion signal sequence), including the mature form of interleukin 1/IL-1 family members, the alpha-crystallin B chain HSPB5, the carbohydrate-binding proteins galectin-1/LGALS1 and galectin-3/LGALS3, the microtubule-associated protein Tau/MAPT, and the annexin A1/ANXA1; the translocation process is dependent on cargo protein unfolding and enhanced by chaperones HSP90AB1 and HSP90B1/GRP9. Could also associates with the presenilin-dependent gamma-secretase complex in order to regulate gamma-cleavages of the amyloid beta A4 protein to yield amyloid-beta 40/Abeta40. The polypeptide is Transmembrane emp24 domain-containing protein 10 (TMED10) (Mesocricetus auratus (Golden hamster)).